The sequence spans 388 residues: DNA replication and repair protein RecF (388 aa).

Residue 30–37 participates in ATP binding; the sequence is GANGNGKT.

The protein belongs to the RecF family.

It is found in the cytoplasm. Its function is as follows. The RecF protein is involved in DNA metabolism; it is required for DNA replication and normal SOS inducibility. RecF binds preferentially to single-stranded, linear DNA. It also seems to bind ATP. The polypeptide is DNA replication and repair protein RecF (Nocardia farcinica (strain IFM 10152)).